The chain runs to 336 residues: D-erythrose-4-phosphate dehydrogenase (336 aa).

Residues 11-12 (RI) and Arg-80 contribute to the NAD(+) site. Substrate contacts are provided by residues 153-155 (SCT), Arg-199, 212-213 (TK), and Arg-235. The active-site Nucleophile is the Cys-154. Asn-317 is an NAD(+) binding site.

Belongs to the glyceraldehyde-3-phosphate dehydrogenase family. Epd subfamily. In terms of assembly, homotetramer.

It localises to the cytoplasm. The catalysed reaction is D-erythrose 4-phosphate + NAD(+) + H2O = 4-phospho-D-erythronate + NADH + 2 H(+). It functions in the pathway cofactor biosynthesis; pyridoxine 5'-phosphate biosynthesis; pyridoxine 5'-phosphate from D-erythrose 4-phosphate: step 1/5. Catalyzes the NAD-dependent conversion of D-erythrose 4-phosphate to 4-phosphoerythronate. This is D-erythrose-4-phosphate dehydrogenase from Aeromonas hydrophila subsp. hydrophila (strain ATCC 7966 / DSM 30187 / BCRC 13018 / CCUG 14551 / JCM 1027 / KCTC 2358 / NCIMB 9240 / NCTC 8049).